Reading from the N-terminus, the 231-residue chain is MSLPVVRLVWLGRVHYSELLALQEHWLRRLQADPRPGTLSGTKAGVLLVCEPAGPVYTGGLRGGLTPEETTRLRALGAEVRATGRGGLATFHGPGQLLCHPVLDLRLLGLRLRTHVAALEACAVRLCELRGLQGARARPPPYTGVWLGERKICAIGVRCGRHITSHGLALNCSTDLTWFEHIVPCGLVGTGVTSLSEALQRLVTVDEVMPSFLVAFKETFKCTLISEDSPS.

Residues 41 to 224 form the BPL/LPL catalytic domain; that stretch reads GTKAGVLLVC…AFKETFKCTL (184 aa). Lysine 43 carries the N6-succinyllysine modification. Residues 85–92, 154–156, and 167–169 contribute to the substrate site; these read RGGLATFH, AIG, and GLA. Cysteine 185 acts as the Acyl-thioester intermediate in catalysis.

The protein belongs to the LipB family.

The protein resides in the mitochondrion. It carries out the reaction octanoyl-[ACP] + L-lysyl-[protein] = N(6)-octanoyl-L-lysyl-[protein] + holo-[ACP] + H(+). The protein operates within protein modification; protein lipoylation via endogenous pathway; protein N(6)-(lipoyl)lysine from octanoyl-[acyl-carrier-protein]: step 1/2. Functionally, catalyzes the transfer of endogenously produced octanoic acid from octanoyl-acyl-carrier-protein onto the lipoyl domains of lipoate-dependent enzymes such as the protein H of the glycine cleavage system (GCSH). Lipoyl-ACP can also act as a substrate although octanoyl-ACP is likely to be the physiological substrate. This is Octanoyl-[acyl-carrier-protein]:protein N-octanoyltransferase LIPT2, mitochondrial from Mus musculus (Mouse).